The following is a 964-amino-acid chain: Pumilio homolog 3 (964 aa).

The disordered stretch occupies residues 1-22 (MMIPELGRRPMHRGNEDSSFGD). Serine 192 is subject to Phosphoserine. 3 disordered regions span residues 204–235 (PVVQQPSRPASRNTFDENVDSNNNLSPSASQG), 256–300 (GTPD…TSGL), and 343–388 (DGHN…VANP). Composition is skewed to polar residues over residues 207-216 (QQPSRPASRN) and 223-234 (DSNNNLSPSASQ). A Phosphothreonine modification is found at threonine 257. Composition is skewed to polar residues over residues 287-300 (TSNQSPFNGVTSGL) and 356-384 (RSDQARGTASCRNSQMRGSQGSAYNSGSG). Residues 606–946 (FGSSMLEEFK…HIVARVEKLV (341 aa)) form the PUM-HD domain. 8 Pumilio repeats span residues 626–661 (EIAGHVVEFSSDQYGSRFIQQKLETATTDEKNMVYE), 662–697 (EIMPKALALMTDVFGNYVIQKFFEHGLPPQRRELGE), 698–733 (KLIDNVLPLSLQMYGCRVIQKAIEVVDLDQKIQMVK), 734–769 (ELDGHVMRCVRDQNGNHVVQKCIECVPEENIEFIIS), 770–806 (TFFGHVVTLSTHPYGCRVIQRVLEHCHNPDTQSKVME), 807–842 (EILSTVSMLTQDQYGNYVVQHVLEHGKPDERTVIIK), 843–878 (ELAGKIVQMSQQKFASNVVEKCLTFGGPEERELLVN), and 879–920 (EMLG…LILT).

The protein localises to the cytoplasm. Functionally, sequence-specific RNA-binding protein that regulates translation and mRNA stability by binding the 3'-UTR of target mRNAs. Binds the APUM-binding elements (APBEs) in the 3'-UTR mRNA sequence of CLV1, PNH, WUS and FAS2. The chain is Pumilio homolog 3 (APUM3) from Arabidopsis thaliana (Mouse-ear cress).